The sequence spans 380 residues: Flap endonuclease 1 (380 aa).

The interval 1–104 (MGIKGLSQLI…GELTKRAEKR (104 aa)) is N-domain. D34 lines the Mg(2+) pocket. Residues R47 and R70 each coordinate DNA. Mg(2+) contacts are provided by D86, E158, E160, D179, and D181. The interval 122 to 253 (DIDKFNRRLV…KKAVELINKH (132 aa)) is I-domain. Residue E158 participates in DNA binding. Residues G231 and D233 each coordinate DNA. D233 contacts Mg(2+). The interval 336 to 344 (TQGRLDSFF) is interaction with PCNA. The disordered stretch occupies residues 342-380 (SFFKVLPSTPNPKRKIEDKKTPASKKAKTTGGKPGRKPK). Over residues 363–380 (PASKKAKTTGGKPGRKPK) the composition is skewed to basic residues.

Belongs to the XPG/RAD2 endonuclease family. FEN1 subfamily. Interacts with PCNA. Three molecules of FEN1 bind to one PCNA trimer with each molecule binding to one PCNA monomer. PCNA stimulates the nuclease activity without altering cleavage specificity. Mg(2+) serves as cofactor. Phosphorylated. Phosphorylation upon DNA damage induces relocalization to the nuclear plasma.

It localises to the nucleus. The protein resides in the nucleolus. The protein localises to the nucleoplasm. It is found in the mitochondrion. Structure-specific nuclease with 5'-flap endonuclease and 5'-3' exonuclease activities involved in DNA replication and repair. During DNA replication, cleaves the 5'-overhanging flap structure that is generated by displacement synthesis when DNA polymerase encounters the 5'-end of a downstream Okazaki fragment. It enters the flap from the 5'-end and then tracks to cleave the flap base, leaving a nick for ligation. Also involved in the long patch base excision repair (LP-BER) pathway, by cleaving within the apurinic/apyrimidinic (AP) site-terminated flap. Acts as a genome stabilization factor that prevents flaps from equilibrating into structures that lead to duplications and deletions. Also possesses 5'-3' exonuclease activity on nicked or gapped double-stranded DNA, and exhibits RNase H activity. Also involved in replication and repair of rDNA and in repairing mitochondrial DNA. This chain is Flap endonuclease 1, found in Aedes aegypti (Yellowfever mosquito).